The sequence spans 179 residues: Large ribosomal subunit protein bL9 (179 aa).

The tract at residues 156–179 (PEGAPVPVAEEPAAEAEQAEVAAE) is disordered. Residues 157–166 (EGAPVPVAEE) show a composition bias toward low complexity. Positions 167 to 179 (PAAEAEQAEVAAE) are enriched in acidic residues.

This sequence belongs to the bacterial ribosomal protein bL9 family.

In terms of biological role, binds to the 23S rRNA. In Porphyromonas gingivalis (strain ATCC 33277 / DSM 20709 / CIP 103683 / JCM 12257 / NCTC 11834 / 2561), this protein is Large ribosomal subunit protein bL9.